Consider the following 382-residue polypeptide: S-adenosylmethionine synthase (382 aa).

Histidine 15 lines the ATP pocket. Aspartate 17 contributes to the Mg(2+) binding site. Residue glutamate 43 coordinates K(+). Glutamate 56 and glutamine 99 together coordinate L-methionine. Positions 99–109 (QSGDIAQGVDR) are flexible loop. Residues 164 to 166 (DAK), 230 to 231 (KF), aspartate 239, 245 to 246 (RK), alanine 262, and lysine 266 contribute to the ATP site. Position 239 (aspartate 239) interacts with L-methionine. Residue lysine 270 participates in L-methionine binding.

This sequence belongs to the AdoMet synthase family. Homotetramer; dimer of dimers. Mg(2+) serves as cofactor. K(+) is required as a cofactor.

The protein localises to the cytoplasm. It catalyses the reaction L-methionine + ATP + H2O = S-adenosyl-L-methionine + phosphate + diphosphate. It participates in amino-acid biosynthesis; S-adenosyl-L-methionine biosynthesis; S-adenosyl-L-methionine from L-methionine: step 1/1. Catalyzes the formation of S-adenosylmethionine (AdoMet) from methionine and ATP. The overall synthetic reaction is composed of two sequential steps, AdoMet formation and the subsequent tripolyphosphate hydrolysis which occurs prior to release of AdoMet from the enzyme. This Dichelobacter nodosus (strain VCS1703A) protein is S-adenosylmethionine synthase.